Consider the following 289-residue polypeptide: Diacylglycerol pyrophosphate phosphatase 1 (289 aa).

Residues 1–21 (MNRVSFIKTPFNIGAKWRLED) lie on the Vacuolar side of the membrane. A helical membrane pass occupies residues 22-42 (VFLLIIMILLNYPVYYQQPFE). Over 43 to 65 (RQFYINDLTISHPYATTERVNNN) the chain is Cytoplasmic. Residues 66–86 (MLFVYSFVVPSLTILIIGSIL) form a helical membrane-spanning segment. Residues 87–92 (ADRRHL) lie on the Vacuolar side of the membrane. Residues 93-113 (IFILYTSLLGLSLAWFSTSFF) form a helical membrane-spanning segment. Over 114–172 (TNFIKNWIGRLRPDFLDRCQPVEGLPLDTLFTAKDVCTTKNHERLLDGFRTTPSGHSSE) the chain is Cytoplasmic. The tract at residues 118–126 (KNWIGRLRP) is phosphatase sequence motif I. The interval 166-169 (PSGH) is phosphatase sequence motif II. The next 2 helical transmembrane spans lie at 173–193 (SFAG…TESP) and 194–214 (LMPL…ALIA). Topologically, residues 215 to 222 (LSRTQDYR) are cytoplasmic. The phosphatase sequence motif III stretch occupies residues 216–227 (SRTQDYRHHFVD). Residues 223 to 243 (HHFVDVILGSMLGYIMAHFFY) traverse the membrane as a helical segment. Residues 244–289 (RRIFPPIDDPLPFKPLMDDSDVTLEEAVTHQRIPDEELHPLSDEGM) are Vacuolar-facing. A Phosphoserine modification is found at serine 285.

It belongs to the PA-phosphatase related phosphoesterase family.

The protein localises to the vacuole membrane. It catalyses the reaction a 1,2-diacyl-sn-glycerol 3-diphosphate + H2O = a 1,2-diacyl-sn-glycero-3-phosphate + phosphate + H(+). The catalysed reaction is a 1,2-diacyl-sn-glycero-3-phosphate + H2O = a 1,2-diacyl-sn-glycerol + phosphate. It carries out the reaction a 1-acyl-sn-glycero-3-phosphate + H2O = a 1-acyl-sn-glycerol + phosphate. With respect to regulation, inhibited by sodium fluoride (NaF) and pyrophosphate. Strongly inhibited by manganese ion and, to a lower extent, by magnesium and calcium ions. Also inhibited by Cu(2+) ion. In an indirect manner, it is also inhibited by the zinc ion which is able to form a complex with DGPP and prevent the enzyme from removing the phosphate from the substrate. Not inhibited by N-ethylmaleimide. Its function is as follows. Catalyzes the dephosphorylation of diacylglycerol diphosphate (DGPP) to phosphatidate (PA) and the subsequent dephosphorylation of PA to diacylglycerol (DAG). Together with LPP1, regulates intracellular DGPP and PA levels, which are phospholipid molecules believed to play a signaling role in stress response. Can also use lysophosphatidic acid (LPA) and phosphatidylglycerophosphate as substrates. Substrate preference is DGPP &gt; LPA &gt; PA. Activity is independent of a divalent cation ion and insensitive to inhibition by N-ethylmaleimide. This is Diacylglycerol pyrophosphate phosphatase 1 (DPP1) from Saccharomyces cerevisiae (strain ATCC 204508 / S288c) (Baker's yeast).